The sequence spans 458 residues: Adenylosuccinate synthetase (458 aa).

GTP contacts are provided by residues 17–23 (GDEGKGK) and 45–47 (GHT). Catalysis depends on Asp18, which acts as the Proton acceptor. Asp18 and Gly45 together coordinate Mg(2+). IMP is bound by residues 18–21 (DEGK), 43–46 (NAGH), Thr137, Arg151, Gln247, Thr262, and Arg330. His46 functions as the Proton donor in the catalytic mechanism. 326–332 (VTTGRSR) provides a ligand contact to substrate. GTP-binding positions include Arg332, 358 to 360 (KLD), and 440 to 442 (STS).

Belongs to the adenylosuccinate synthetase family. Homodimer. The cofactor is Mg(2+).

The protein resides in the cytoplasm. It catalyses the reaction IMP + L-aspartate + GTP = N(6)-(1,2-dicarboxyethyl)-AMP + GDP + phosphate + 2 H(+). The protein operates within purine metabolism; AMP biosynthesis via de novo pathway; AMP from IMP: step 1/2. Plays an important role in the de novo pathway of purine nucleotide biosynthesis. Catalyzes the first committed step in the biosynthesis of AMP from IMP. The protein is Adenylosuccinate synthetase of Verminephrobacter eiseniae (strain EF01-2).